The primary structure comprises 643 residues: 1-deoxy-D-xylulose-5-phosphate synthase (643 aa).

Thiamine diphosphate contacts are provided by residues H78 and 119-121 (AHS). D150 serves as a coordination point for Mg(2+). Residues 151–152 (GA), N179, Y288, and E370 contribute to the thiamine diphosphate site. N179 contributes to the Mg(2+) binding site.

The protein belongs to the transketolase family. DXPS subfamily. As to quaternary structure, homodimer. Mg(2+) is required as a cofactor. The cofactor is thiamine diphosphate.

It catalyses the reaction D-glyceraldehyde 3-phosphate + pyruvate + H(+) = 1-deoxy-D-xylulose 5-phosphate + CO2. Its pathway is metabolic intermediate biosynthesis; 1-deoxy-D-xylulose 5-phosphate biosynthesis; 1-deoxy-D-xylulose 5-phosphate from D-glyceraldehyde 3-phosphate and pyruvate: step 1/1. Its function is as follows. Catalyzes the acyloin condensation reaction between C atoms 2 and 3 of pyruvate and glyceraldehyde 3-phosphate to yield 1-deoxy-D-xylulose-5-phosphate (DXP). In Xanthobacter autotrophicus (strain ATCC BAA-1158 / Py2), this protein is 1-deoxy-D-xylulose-5-phosphate synthase.